Reading from the N-terminus, the 27-residue chain is Peptide Cn29 (27 aa).

Intrachain disulfides connect Cys2-Cys23, Cys5-Cys18, and Cys12-Cys25.

In terms of tissue distribution, expressed by the venom gland.

It is found in the secreted. In Centruroides noxius (Mexican scorpion), this protein is Peptide Cn29.